The primary structure comprises 384 residues: MVMDAGKKREAGALLPEEAFETGAPEGTLGAEEELWLADPETLKLAGGAQKILAAEPAEHFSGELIDCEVEANTGVHREAAGVARDLLARRRTLLEHAGRLGRVLGTSGTHPLGDWREQEIIDKPHYQYLKRKLGWLIRRNNTFSLHVHYAVQGKEKVIYLFDRIREYVPHFLAVSVNSPFWQGEFTDTRSARALVFSRSLPHAGMPEAFGSWSAYAGYLDFVGRPGVIRRLGEIWWDIRPHPRLSTLEIRAFDAQTDPARSEALISLAAATCDMLCAEYESGELRPARPVREIEDNKWSAQRHGLDGLFVDHETHEPVPARWAVERLAELAASSSRRDLSSLERLLEEPTESERQLLVWRETGSVKEVARDIARRTRAAIPAT.

The protein belongs to the glutamate--cysteine ligase type 2 family. YbdK subfamily.

The enzyme catalyses L-cysteine + L-glutamate + ATP = gamma-L-glutamyl-L-cysteine + ADP + phosphate + H(+). Functionally, ATP-dependent carboxylate-amine ligase which exhibits weak glutamate--cysteine ligase activity. The protein is Putative glutamate--cysteine ligase 2-2 of Rubrobacter xylanophilus (strain DSM 9941 / JCM 11954 / NBRC 16129 / PRD-1).